The chain runs to 298 residues: Probable tRNA(His) guanylyltransferase (298 aa).

Residues D58, G59, and D105 each coordinate Mg(2+). Residues 58–63 (DGRNFH) and 104–105 (SD) each bind GTP.

It belongs to the tRNA(His) guanylyltransferase family. Homotetramer. Interacts with MFN1 and MFN2; functions as a guanyl-nucleotide exchange factor/GEF for MFN2 and also probably MFN1. Mg(2+) is required as a cofactor.

It localises to the cytoplasm. The protein localises to the mitochondrion. The catalysed reaction is a 5'-end ribonucleotide-tRNA(His) + GTP + ATP + H2O = a 5'-end phospho-guanosine-ribonucleotide-tRNA(His) + AMP + 2 diphosphate + H(+). In terms of biological role, adds a GMP to the 5'-end of tRNA(His) after transcription and RNase P cleavage. This step is essential for proper recognition of the tRNA and for the fidelity of protein synthesis. Also functions as a guanyl-nucleotide exchange factor/GEF for the MFN1 and MFN2 mitofusins thereby regulating mitochondrial fusion. By regulating both mitochondrial dynamics and bioenergetic function, it contributes to cell survival following oxidative stress. This chain is Probable tRNA(His) guanylyltransferase (Thg1l), found in Mus musculus (Mouse).